Here is a 702-residue protein sequence, read N- to C-terminus: Elongation factor G 2 (702 aa).

A tr-type G domain is found at 8–285 (DMVRNIGISA…AVTYYLPSPA (278 aa)). GTP contacts are provided by residues 17–24 (AHIDSGKT), 84–88 (DTPGH), and 138–141 (NKLD).

This sequence belongs to the TRAFAC class translation factor GTPase superfamily. Classic translation factor GTPase family. EF-G/EF-2 subfamily.

The protein localises to the cytoplasm. In terms of biological role, catalyzes the GTP-dependent ribosomal translocation step during translation elongation. During this step, the ribosome changes from the pre-translocational (PRE) to the post-translocational (POST) state as the newly formed A-site-bound peptidyl-tRNA and P-site-bound deacylated tRNA move to the P and E sites, respectively. Catalyzes the coordinated movement of the two tRNA molecules, the mRNA and conformational changes in the ribosome. The polypeptide is Elongation factor G 2 (Bdellovibrio bacteriovorus (strain ATCC 15356 / DSM 50701 / NCIMB 9529 / HD100)).